The following is a 33-amino-acid chain: Cytochrome b6-f complex subunit 6 (33 aa).

The helical transmembrane segment at 4 to 24 (ITIISYFGFLLASIIFTLVLF) threads the bilayer.

This sequence belongs to the PetL family. As to quaternary structure, the 4 large subunits of the cytochrome b6-f complex are cytochrome b6, subunit IV (17 kDa polypeptide, PetD), cytochrome f and the Rieske protein, while the 4 small subunits are PetG, PetL, PetM and PetN. The complex functions as a dimer.

The protein localises to the plastid. It is found in the chloroplast thylakoid membrane. In terms of biological role, component of the cytochrome b6-f complex, which mediates electron transfer between photosystem II (PSII) and photosystem I (PSI), cyclic electron flow around PSI, and state transitions. PetL is important for photoautotrophic growth as well as for electron transfer efficiency and stability of the cytochrome b6-f complex. This chain is Cytochrome b6-f complex subunit 6, found in Pinus thunbergii (Japanese black pine).